Consider the following 611-residue polypeptide: Serine/arginine repetitive matrix protein 4 (611 aa).

Disordered regions lie at residues Ala38–Met248 and Ser263–Arg611. 2 stretches are compositionally biased toward basic residues: residues Arg107–Ser123 and Val131–Pro189. A compositionally biased stretch (low complexity) spans Ser190 to Cys202. Basic and acidic residues predominate over residues Glu203 to Lys216. Over residues Ser217–Ser226 the composition is skewed to basic residues. The segment covering Lys270–Asp290 has biased composition (polar residues). The span at Thr291–Ser301 shows a compositional bias: low complexity. A compositionally biased stretch (polar residues) spans Leu322 to Asn341. Composition is skewed to low complexity over residues Ser390–Thr422 and Ser430–Ser461. Residues Pro462 to Arg482 show a composition bias toward basic and acidic residues. Over residues Ala483–Arg498 the composition is skewed to basic residues. Residues Asp499–Arg508 show a composition bias toward basic and acidic residues. Over residues Pro522 to Tyr549 the composition is skewed to low complexity. Over residues Ser550 to Thr564 the composition is skewed to basic residues. Over residues Arg565–Arg580 the composition is skewed to low complexity. Residues Ser581–Ser595 are compositionally biased toward basic residues. The segment covering Gln596 to Arg611 has biased composition (low complexity).

It belongs to the nSR100 family. Post-translationally, phosphorylated. As to expression, specifically expressed in neuronal cells (at protein level). Expressed in the cerebellum.

The protein localises to the nucleus. Splicing factor specifically required for neural cell differentiation. Acts in conjunction with nPTB/PTBP2 by binding directly to its regulated target transcripts and promotes neural-specific exon inclusion in many genes that function in neural cell differentiation. Required to promote the inclusion of neural-specific exon 10 in nPTB/PTBP2, leading to increased expression of neural-specific nPTB/PTBP2. Also promotes the inclusion of exon 16 in DAAM1 in neuron extracts. Promotes alternative splicing of REST transcripts to produce REST isoform 3 (REST4) with greatly reduced repressive activity, thereby activating expression of REST targets in neural cells. Plays an important role during embryonic development as well as in the proper functioning of the adult nervous system. Regulates alternative splicing events in genes with important neuronal functions. This Homo sapiens (Human) protein is Serine/arginine repetitive matrix protein 4 (SRRM4).